The following is a 158-amino-acid chain: N-acetylgalactosamine-specific phosphotransferase enzyme IIB component 1 (158 aa).

One can recognise a PTS EIIB type-4 domain in the interval 1–158 (MTSPNILLTR…PGDQKEQIPD (158 aa)). Residue histidine 17 is the Pros-phosphohistidine intermediate of the active site.

The protein resides in the cytoplasm. Its function is as follows. The phosphoenolpyruvate-dependent sugar phosphotransferase system (sugar PTS), a major carbohydrate active -transport system, catalyzes the phosphorylation of incoming sugar substrates concomitantly with their translocation across the cell membrane. This system is involved in N-acetylgalactosamine transport. In Escherichia coli (strain K12), this protein is N-acetylgalactosamine-specific phosphotransferase enzyme IIB component 1 (agaB).